A 442-amino-acid polypeptide reads, in one-letter code: MSPHPGDRVRVERADVTNEGILMPSSTSDHLVIKLDGGYNVGIDRADASIDLVTSDAYDIGGTQTDIGSSAGAGADTEADKTESDITSKSAASAVAFDESLPTVSLISTGGTIASTVDYRTGAVTAQFDAEDVLRAVPDLAGRANYRGRVVRNILSENMTPAVWQDLAAAVADEIRAGADGVVVMHGTDTMQYSASALSYMLDTPVPVVFTGSQRSADRPSSDNVMNAVCAVEAATADISGVFVCMHASTADDTCALHRGTRVRKNHTSRRDAFKTVGATPIGKIEYDTETVSFHRDHAARESTELNLTSELNEDVMLLTFTPGMNIDRQTAFLTDSTPDGLIIAGTGLGHVHTEFIPTVAELVADGVVVAMTSQCIEGRVCDRVYDTGRDLLEAGVVEAGDTLPGTAKVKLMWALANHPDPTNAMRKSLAGELQHRSVPWE.

The tract at residues 63 to 84 (TQTDIGSSAGAGADTEADKTES) is disordered. The Asparaginase/glutaminase domain maps to 102–429 (PTVSLISTGG…PDPTNAMRKS (328 aa)). Residues T112, T188, D189, and K265 contribute to the active site.

This sequence belongs to the asparaginase 1 family. GatD subfamily. Heterodimer of GatD and GatE.

The catalysed reaction is L-glutamyl-tRNA(Gln) + L-glutamine + ATP + H2O = L-glutaminyl-tRNA(Gln) + L-glutamate + ADP + phosphate + H(+). Functionally, allows the formation of correctly charged Gln-tRNA(Gln) through the transamidation of misacylated Glu-tRNA(Gln) in organisms which lack glutaminyl-tRNA synthetase. The reaction takes place in the presence of glutamine and ATP through an activated gamma-phospho-Glu-tRNA(Gln). The GatDE system is specific for glutamate and does not act on aspartate. The chain is Glutamyl-tRNA(Gln) amidotransferase subunit D from Haloquadratum walsbyi (strain DSM 16790 / HBSQ001).